The following is a 1563-amino-acid chain: Pentafunctional AROM polypeptide (1563 aa).

The tract at residues 1–382 (MAEPISNPTR…YEPKASVVED (382 aa)) is 3-dehydroquinate synthase. NAD(+)-binding positions include 48 to 50 (DTN), 82 to 85 (EYSK), 113 to 115 (GGV), and D118. A 7-phospho-2-dehydro-3-deoxy-D-arabino-heptonate-binding site is contributed by R129. 138 to 139 (TT) lines the NAD(+) pocket. 2 residues coordinate 7-phospho-2-dehydro-3-deoxy-D-arabino-heptonate: D145 and K151. Residue K160 coordinates NAD(+). 7-phospho-2-dehydro-3-deoxy-D-arabino-heptonate is bound at residue N161. NAD(+) is bound by residues 178–181 (FLNT) and N189. E193 is a binding site for Zn(2+). Residues 193–196 (EVIK) and K248 each bind 7-phospho-2-dehydro-3-deoxy-D-arabino-heptonate. Residue E258 is the Proton acceptor; for 3-dehydroquinate synthase activity of the active site. 7-phospho-2-dehydro-3-deoxy-D-arabino-heptonate-binding positions include 262-266 (RNLLN) and H269. H269 provides a ligand contact to Zn(2+). The Proton acceptor; for 3-dehydroquinate synthase activity role is filled by H273. The 7-phospho-2-dehydro-3-deoxy-D-arabino-heptonate site is built by H285 and K354. H285 contacts Zn(2+). Positions 395 to 834 (VFAGVPKDLN…WDTMSNYFKV (440 aa)) are EPSP synthase. C816 functions as the For EPSP synthase activity in the catalytic mechanism. Positions 857–1051 (PKSIFIIGMR…KKKPHSFFVS (195 aa)) are shikimate kinase. An ATP-binding site is contributed by 864–871 (GMRGAGKS). The segment at 1052–1265 (LTVPNVSKAL…AAPGQLSAAE (214 aa)) is 3-dehydroquinase. H1168 acts as the Proton acceptor; for 3-dehydroquinate dehydratase activity in catalysis. The active-site Schiff-base intermediate with substrate; for 3-dehydroquinate dehydratase activity is the K1196. The shikimate dehydrogenase stretch occupies residues 1278-1563 (PRSFHLFGNP…TDAQAAVMGN (286 aa)).

It in the N-terminal section; belongs to the sugar phosphate cyclases superfamily. Dehydroquinate synthase family. This sequence in the 2nd section; belongs to the EPSP synthase family. In the 3rd section; belongs to the shikimate kinase family. The protein in the 4th section; belongs to the type-I 3-dehydroquinase family. It in the C-terminal section; belongs to the shikimate dehydrogenase family. As to quaternary structure, homodimer. Zn(2+) is required as a cofactor.

Its subcellular location is the cytoplasm. The catalysed reaction is 7-phospho-2-dehydro-3-deoxy-D-arabino-heptonate = 3-dehydroquinate + phosphate. It catalyses the reaction 3-dehydroquinate = 3-dehydroshikimate + H2O. The enzyme catalyses shikimate + NADP(+) = 3-dehydroshikimate + NADPH + H(+). It carries out the reaction shikimate + ATP = 3-phosphoshikimate + ADP + H(+). The catalysed reaction is 3-phosphoshikimate + phosphoenolpyruvate = 5-O-(1-carboxyvinyl)-3-phosphoshikimate + phosphate. Its pathway is metabolic intermediate biosynthesis; chorismate biosynthesis; chorismate from D-erythrose 4-phosphate and phosphoenolpyruvate: step 2/7. The protein operates within metabolic intermediate biosynthesis; chorismate biosynthesis; chorismate from D-erythrose 4-phosphate and phosphoenolpyruvate: step 3/7. It participates in metabolic intermediate biosynthesis; chorismate biosynthesis; chorismate from D-erythrose 4-phosphate and phosphoenolpyruvate: step 4/7. It functions in the pathway metabolic intermediate biosynthesis; chorismate biosynthesis; chorismate from D-erythrose 4-phosphate and phosphoenolpyruvate: step 5/7. Its pathway is metabolic intermediate biosynthesis; chorismate biosynthesis; chorismate from D-erythrose 4-phosphate and phosphoenolpyruvate: step 6/7. The AROM polypeptide catalyzes 5 consecutive enzymatic reactions in prechorismate polyaromatic amino acid biosynthesis. This chain is Pentafunctional AROM polypeptide, found in Neurospora crassa (strain ATCC 24698 / 74-OR23-1A / CBS 708.71 / DSM 1257 / FGSC 987).